Reading from the N-terminus, the 278-residue chain is 4-hydroxy-3-methylbut-2-enyl diphosphate reductase (278 aa).

A [4Fe-4S] cluster-binding site is contributed by Cys-12. His-40 and His-75 together coordinate (2E)-4-hydroxy-3-methylbut-2-enyl diphosphate. The dimethylallyl diphosphate site is built by His-40 and His-75. Isopentenyl diphosphate-binding residues include His-40 and His-75. A [4Fe-4S] cluster-binding site is contributed by Cys-97. Residue His-125 coordinates (2E)-4-hydroxy-3-methylbut-2-enyl diphosphate. Residue His-125 coordinates dimethylallyl diphosphate. His-125 serves as a coordination point for isopentenyl diphosphate. Residue Glu-127 is the Proton donor of the active site. Thr-157 contributes to the (2E)-4-hydroxy-3-methylbut-2-enyl diphosphate binding site. Cys-187 contacts [4Fe-4S] cluster. Residues Ser-215, Ser-216, Asn-217, and Ser-258 each coordinate (2E)-4-hydroxy-3-methylbut-2-enyl diphosphate. The dimethylallyl diphosphate site is built by Ser-215, Ser-216, Asn-217, and Ser-258. Ser-215, Ser-216, Asn-217, and Ser-258 together coordinate isopentenyl diphosphate.

It belongs to the IspH family. Requires [4Fe-4S] cluster as cofactor.

It catalyses the reaction isopentenyl diphosphate + 2 oxidized [2Fe-2S]-[ferredoxin] + H2O = (2E)-4-hydroxy-3-methylbut-2-enyl diphosphate + 2 reduced [2Fe-2S]-[ferredoxin] + 2 H(+). The enzyme catalyses dimethylallyl diphosphate + 2 oxidized [2Fe-2S]-[ferredoxin] + H2O = (2E)-4-hydroxy-3-methylbut-2-enyl diphosphate + 2 reduced [2Fe-2S]-[ferredoxin] + 2 H(+). The protein operates within isoprenoid biosynthesis; dimethylallyl diphosphate biosynthesis; dimethylallyl diphosphate from (2E)-4-hydroxy-3-methylbutenyl diphosphate: step 1/1. Its pathway is isoprenoid biosynthesis; isopentenyl diphosphate biosynthesis via DXP pathway; isopentenyl diphosphate from 1-deoxy-D-xylulose 5-phosphate: step 6/6. Catalyzes the conversion of 1-hydroxy-2-methyl-2-(E)-butenyl 4-diphosphate (HMBPP) into a mixture of isopentenyl diphosphate (IPP) and dimethylallyl diphosphate (DMAPP). Acts in the terminal step of the DOXP/MEP pathway for isoprenoid precursor biosynthesis. The protein is 4-hydroxy-3-methylbut-2-enyl diphosphate reductase of Pseudothermotoga lettingae (strain ATCC BAA-301 / DSM 14385 / NBRC 107922 / TMO) (Thermotoga lettingae).